Consider the following 21-residue polypeptide: Dahlein-5.5 (21 aa).

Expressed by the skin dorsal glands.

The protein resides in the secreted. In terms of biological role, has no antimicrobial activity. Strongly inhibits the formation of NO by neuronal nitric oxide synthase at micromolar concentrations. This is Dahlein-5.5 from Ranoidea dahlii (Dahl's aquatic frog).